Here is a 78-residue protein sequence, read N- to C-terminus: uncharacterized protein (78 aa).

Residues 1-22 (MFKKSVLFATLLSGVMAFSTNA) form the signal peptide.

This sequence belongs to the BhsA/McbA family.

Its subcellular location is the periplasm. Functionally, probably involved in reactive chlorine species (RCS) stress resistance. This is an uncharacterized protein from Escherichia coli (strain K12).